A 119-amino-acid chain; its full sequence is Ribosome-binding factor A (119 aa).

Belongs to the RbfA family. Monomer. Binds 30S ribosomal subunits, but not 50S ribosomal subunits or 70S ribosomes.

It is found in the cytoplasm. Its function is as follows. One of several proteins that assist in the late maturation steps of the functional core of the 30S ribosomal subunit. Associates with free 30S ribosomal subunits (but not with 30S subunits that are part of 70S ribosomes or polysomes). Required for efficient processing of 16S rRNA. May interact with the 5'-terminal helix region of 16S rRNA. This chain is Ribosome-binding factor A, found in Ligilactobacillus salivarius (strain UCC118) (Lactobacillus salivarius).